The following is a 547-amino-acid chain: Membrane transporter D1 (547 aa).

Topologically, residues 1–2 (MR) are cytoplasmic. The chain crosses the membrane as a helical span at residues 3–25 (ASVMLCAALGGFLFGYDTGVINA). At 26–43 (ALFQMKDHFGFSEHSWQY) the chain is on the extracellular side. Residues 44–64 (ALIVAIAIAGAFVGAFISGFI) traverse the membrane as a helical segment. The Cytoplasmic portion of the chain corresponds to 65-78 (SAAFGRRPCIAVAD). The chain crosses the membrane as a helical span at residues 79 to 99 (ALFVIGSVLMGAAPNVEVVLV). Residues 100–101 (SR) lie on the Extracellular side of the membrane. Residues 102–122 (VIVGLAIGISSATIPVYLAEV) traverse the membrane as a helical segment. At 123-136 (TSPKHRGATIVLNN) the chain is on the cytoplasmic side. A helical membrane pass occupies residues 137-157 (LFLTGGQFVAAGFTAIMVVFT). Over 158-164 (SKNIGWR) the chain is Extracellular. Residues 165 to 185 (VAIGIGALPAVVQAFCLLFFL) traverse the membrane as a helical segment. Over 186-245 (PESPRWLLSKGHADRAKAVADKFEVDLCEFQEGDELPSVRIDYRPLMARDMRFRVVLSSG) the chain is Cytoplasmic. The helical transmembrane segment at 246-266 (LQIIQQFSGINTIMYYSSVIL) threads the bilayer. At 267-276 (YDAGFRDAIM) the chain is on the extracellular side. The helical transmembrane segment at 277–297 (PVVLSIPLAFMNALFTAVAIF) threads the bilayer. The Cytoplasmic portion of the chain corresponds to 298–308 (TVDRFGRRRML). The chain crosses the membrane as a helical span at residues 309–329 (LISVFGCLVLLVVIAIIGFFI). Over 330 to 339 (GTRISYSVGG) the chain is Extracellular. A helical membrane pass occupies residues 340–360 (GLFLALLAVFLALYAPGIGCI). The Cytoplasmic segment spans residues 361–385 (PWVIMGEIFPTHLRTSAASVATMAN). The chain crosses the membrane as a helical span at residues 386–406 (WGANVLVSQVFPILMGAIGVG). Residue Gly-407 is a topological domain, extracellular. The chain crosses the membrane as a helical span at residues 408–428 (TFTIISGLMALGCIFVYFFAV). The Cytoplasmic segment spans residues 429 to 547 (ETKGLTLEQI…AIKAAPHEPK (119 aa)). Disordered stretches follow at residues 449 to 468 (PPRFHEEGESGESGAGYRED) and 510 to 547 (VSNKFEERATSSSSDPQSLENQDEVRQAAIKAAPHEPK). Residues 519-529 (TSSSSDPQSLE) are compositionally biased toward polar residues.

This sequence belongs to the major facilitator superfamily. Sugar transporter (TC 2.A.1.1) family.

The protein resides in the membrane. The sequence is that of Membrane transporter D1 from Leishmania donovani.